The primary structure comprises 154 residues: Putative pre-16S rRNA nuclease (154 aa).

This sequence belongs to the YqgF nuclease family.

The protein resides in the cytoplasm. Could be a nuclease involved in processing of the 5'-end of pre-16S rRNA. The protein is Putative pre-16S rRNA nuclease of Rickettsia peacockii (strain Rustic).